Reading from the N-terminus, the 100-residue chain is Coiled-coil domain-containing protein 167 (100 aa).

Positions 14–81 (VASEIDRVEE…VLRGENRRNM (68 aa)) form a coiled coil. The helical transmembrane segment at 82-99 (MLSVALLAISALFYYTFI) threads the bilayer.

It is found in the membrane. This Danio rerio (Zebrafish) protein is Coiled-coil domain-containing protein 167 (ccdc167).